Consider the following 267-residue polypeptide: MIKVAVNGAAGRMGGRLITAIKETEGLQLTGALEHAESPMLGQDAGLTAGCGPLDVLISSDLDEVLKATDVLIDFTFPEVSLRNLEACVRHDKSIVIGSTGFTPEQRARVDEMAQNIPVVLAPNMSVGVNACFKLLKEAAQILGDGFDVEIVELHHNKKKDSPSGTAVRMGEIVADALGRDYNKSAVYHREGMCGARTPEEIGMQTVRGGDIVGEHTVYFIGMGERIEITHRAMSRDMFARGAVRAASWLAGKAPGLYDMQDILGLK.

Residues 8 to 13, E34, 98 to 100, and 122 to 125 each bind NAD(+); these read GAAGRM, GST, and APNM. H155 acts as the Proton donor/acceptor in catalysis. H156 is a (S)-2,3,4,5-tetrahydrodipicolinate binding site. The Proton donor role is filled by K159. 165 to 166 contributes to the (S)-2,3,4,5-tetrahydrodipicolinate binding site; that stretch reads GT.

It belongs to the DapB family.

Its subcellular location is the cytoplasm. It catalyses the reaction (S)-2,3,4,5-tetrahydrodipicolinate + NAD(+) + H2O = (2S,4S)-4-hydroxy-2,3,4,5-tetrahydrodipicolinate + NADH + H(+). The catalysed reaction is (S)-2,3,4,5-tetrahydrodipicolinate + NADP(+) + H2O = (2S,4S)-4-hydroxy-2,3,4,5-tetrahydrodipicolinate + NADPH + H(+). Its pathway is amino-acid biosynthesis; L-lysine biosynthesis via DAP pathway; (S)-tetrahydrodipicolinate from L-aspartate: step 4/4. In terms of biological role, catalyzes the conversion of 4-hydroxy-tetrahydrodipicolinate (HTPA) to tetrahydrodipicolinate. The chain is 4-hydroxy-tetrahydrodipicolinate reductase from Syntrophotalea carbinolica (strain DSM 2380 / NBRC 103641 / GraBd1) (Pelobacter carbinolicus).